The following is a 284-amino-acid chain: MEMO1 family protein MmarC5_0191 (284 aa).

The protein belongs to the MEMO1 family.

This is MEMO1 family protein MmarC5_0191 from Methanococcus maripaludis (strain C5 / ATCC BAA-1333).